A 508-amino-acid chain; its full sequence is Photosystem II CP47 reaction center protein (508 aa).

Helical transmembrane passes span 21-36 (SVHL…WAGS), 101-115 (IILS…IWHW), 140-156 (GIHL…FGAF), 203-218 (IAAG…FHLS), 237-252 (VLSS…AFVV), and 457-472 (TFAL…HGAR).

The protein belongs to the PsbB/PsbC family. PsbB subfamily. In terms of assembly, PSII is composed of 1 copy each of membrane proteins PsbA, PsbB, PsbC, PsbD, PsbE, PsbF, PsbH, PsbI, PsbJ, PsbK, PsbL, PsbM, PsbT, PsbX, PsbY, PsbZ, Psb30/Ycf12, at least 3 peripheral proteins of the oxygen-evolving complex and a large number of cofactors. It forms dimeric complexes. Requires Binds multiple chlorophylls. PSII binds additional chlorophylls, carotenoids and specific lipids. as cofactor.

It is found in the plastid. The protein localises to the chloroplast thylakoid membrane. One of the components of the core complex of photosystem II (PSII). It binds chlorophyll and helps catalyze the primary light-induced photochemical processes of PSII. PSII is a light-driven water:plastoquinone oxidoreductase, using light energy to abstract electrons from H(2)O, generating O(2) and a proton gradient subsequently used for ATP formation. This Adiantum capillus-veneris (Maidenhair fern) protein is Photosystem II CP47 reaction center protein.